Here is a 181-residue protein sequence, read N- to C-terminus: CDP-archaeol synthase (181 aa).

5 helical membrane-spanning segments follow: residues 7–27 (VVVA…AVLA), 55–75 (AVGT…RPAA), 80–100 (GVVL…GAMV), 128–148 (FVVV…GDTF), and 150–170 (LPVL…TNGI).

The protein belongs to the CDP-archaeol synthase family. It depends on Mg(2+) as a cofactor.

The protein localises to the cell membrane. It carries out the reaction 2,3-bis-O-(geranylgeranyl)-sn-glycerol 1-phosphate + CTP + H(+) = CDP-2,3-bis-O-(geranylgeranyl)-sn-glycerol + diphosphate. It functions in the pathway membrane lipid metabolism; glycerophospholipid metabolism. Its function is as follows. Catalyzes the formation of CDP-2,3-bis-(O-geranylgeranyl)-sn-glycerol (CDP-archaeol) from 2,3-bis-(O-geranylgeranyl)-sn-glycerol 1-phosphate (DGGGP) and CTP. This reaction is the third ether-bond-formation step in the biosynthesis of archaeal membrane lipids. In Halobacterium salinarum (strain ATCC 29341 / DSM 671 / R1), this protein is CDP-archaeol synthase.